Consider the following 315-residue polypeptide: Aspartate carbamoyltransferase catalytic subunit (315 aa).

The carbamoyl phosphate site is built by Arg64 and Thr65. Lys92 lines the L-aspartate pocket. Residues Arg114, His142, and Gln145 each coordinate carbamoyl phosphate. Positions 175 and 229 each coordinate L-aspartate. Carbamoyl phosphate contacts are provided by Gly270 and Pro271.

It belongs to the aspartate/ornithine carbamoyltransferase superfamily. ATCase family. In terms of assembly, heterododecamer (2C3:3R2) of six catalytic PyrB chains organized as two trimers (C3), and six regulatory PyrI chains organized as three dimers (R2).

It catalyses the reaction carbamoyl phosphate + L-aspartate = N-carbamoyl-L-aspartate + phosphate + H(+). It functions in the pathway pyrimidine metabolism; UMP biosynthesis via de novo pathway; (S)-dihydroorotate from bicarbonate: step 2/3. In terms of biological role, catalyzes the condensation of carbamoyl phosphate and aspartate to form carbamoyl aspartate and inorganic phosphate, the committed step in the de novo pyrimidine nucleotide biosynthesis pathway. This Xanthobacter autotrophicus (strain ATCC BAA-1158 / Py2) protein is Aspartate carbamoyltransferase catalytic subunit.